A 196-amino-acid chain; its full sequence is tRNA (pseudouridine(54)-N(1))-methyltransferase (196 aa).

An S-adenosyl-L-methionine-binding site is contributed by L126.

This sequence belongs to the methyltransferase superfamily. TrmY family. As to quaternary structure, homodimer.

It localises to the cytoplasm. It catalyses the reaction pseudouridine(54) in tRNA + S-adenosyl-L-methionine = N(1)-methylpseudouridine(54) in tRNA + S-adenosyl-L-homocysteine + H(+). Specifically catalyzes the N1-methylation of pseudouridine at position 54 (Psi54) in tRNAs. The chain is tRNA (pseudouridine(54)-N(1))-methyltransferase from Halobacterium salinarum (strain ATCC 700922 / JCM 11081 / NRC-1) (Halobacterium halobium).